The sequence spans 109 residues: MKLSRLFDPCNKAGNTRLCIYLSFIYSEVINMALATKVKEFLEEKLKQEKIDRKYLAEVTNIPYTTVSRIMRAEANREFNPEIDTILKIAKYFNCTMDEVIKRKVQNNS.

The 59-residue stretch at 42-100 folds into the HTH cro/C1-type domain; that stretch reads LEEKLKQEKIDRKYLAEVTNIPYTTVSRIMRAEANREFNPEIDTILKIAKYFNCTMDEV. The segment at residues 53-72 is a DNA-binding region (H-T-H motif); the sequence is RKYLAEVTNIPYTTVSRIMR.

This is an uncharacterized protein from Rickettsia conorii (strain ATCC VR-613 / Malish 7).